The following is a 318-amino-acid chain: NADH-ubiquinone oxidoreductase chain 1 (318 aa).

8 helical membrane-spanning segments follow: residues 2–22, 69–89, 100–120, 146–166, 171–191, 231–251, 253–273, and 285–305; these read FMIN…FLTL, LLFT…WLPL, LGVL…LWSG, LAII…TNLI, HMWL…STLA, IMMM…TPLV, GIYT…FLWI, and LMHL…MWHV.

It belongs to the complex I subunit 1 family. As to quaternary structure, core subunit of respiratory chain NADH dehydrogenase (Complex I) which is composed of 45 different subunits.

It localises to the mitochondrion inner membrane. It carries out the reaction a ubiquinone + NADH + 5 H(+)(in) = a ubiquinol + NAD(+) + 4 H(+)(out). Its function is as follows. Core subunit of the mitochondrial membrane respiratory chain NADH dehydrogenase (Complex I) which catalyzes electron transfer from NADH through the respiratory chain, using ubiquinone as an electron acceptor. Essential for the catalytic activity and assembly of complex I. This chain is NADH-ubiquinone oxidoreductase chain 1 (MT-ND1), found in Myrmecophaga tridactyla (Giant anteater).